A 213-amino-acid polypeptide reads, in one-letter code: Putative cytochrome c-type biogenesis protein HI_1454 (213 aa).

6 helical membrane-spanning segments follow: residues 15-35 (GLASFLSPCIFPIIPIYFGIL), 46-66 (FLFILGLSLTFVSLGFSFGFL), 77-97 (IIAGVIVIILGIHQLGIFKIG), 118-138 (AFVLGLTFSLGWTPCIGPILA), 154-174 (ASMMFVYVLGLATPFVLFSFF), and 192-212 (FKIGGGILIIVMGILLITNNF).

The protein belongs to the DsbD family.

Its subcellular location is the cell membrane. Could be involved in cytochrome c synthesis. In Haemophilus influenzae (strain ATCC 51907 / DSM 11121 / KW20 / Rd), this protein is Putative cytochrome c-type biogenesis protein HI_1454.